The sequence spans 352 residues: Ubiquitin thioesterase otulin (352 aa).

Residues 1–48 (MSRGTMPQPEAWPGASCAETPAREAAATARDGGKAAASGQPRPEMQCP) are disordered. The span at 18–37 (AETPAREAAATARDGGKAAA) shows a compositional bias: low complexity. The short motif at 52-57 (EEDMYR) is the PIM motif element. Tyr56 carries the post-translational modification Phosphotyrosine. Linear diubiquitin binding regions lie at residues 95–96 (EW) and 124–126 (RGD). Positions 118–346 (TSIRRVRGDN…DRHYNIPVRV (229 aa)) constitute an OTU domain. Asp126 is an active-site residue. The active-site Nucleophile is the Cys129. Linear diubiquitin binding stretches follow at residues 255 to 259 (FFSVL), 283 to 289 (TGGLEQV), and 336 to 338 (DDR). His339 is an active-site residue.

Belongs to the peptidase C65 family. Otulin subfamily. Interacts (via the PUB domain) with RNF31 (via the PIM motif); the interaction is direct. Interacts with DVL2. Ubiquitinated. In terms of processing, acetylated. Post-translationally, phosphorylated. Phosphorylation at Tyr-56 prevents interaction with RNF31; dephosphorylation promotes interaction with RNF31 and the LUBAC complex.

It localises to the cytoplasm. The catalysed reaction is Thiol-dependent hydrolysis of ester, thioester, amide, peptide and isopeptide bonds formed by the C-terminal Gly of ubiquitin (a 76-residue protein attached to proteins as an intracellular targeting signal).. Functionally, deubiquitinase that specifically removes linear ('Met-1'-linked) polyubiquitin chains to substrates and acts as a regulator of angiogenesis and innate immune response. Required during angiogenesis, craniofacial and neuronal development by regulating the canonical Wnt signaling together with the LUBAC complex. Acts as a negative regulator of NF-kappa-B by regulating the activity of the LUBAC complex. OTULIN function is mainly restricted to homeostasis of the LUBAC complex: acts by removing 'Met-1'-linked autoubiquitination of the LUBAC complex, thereby preventing inactivation of the LUBAC complex. Acts as a key negative regulator of inflammation by restricting spontaneous inflammation and maintaining immune homeostasis. In myeloid cell, required to prevent unwarranted secretion of cytokines leading to inflammation and autoimmunity by restricting linear polyubiquitin formation. Plays a role in innate immune response by restricting linear polyubiquitin formation on LUBAC complex in response to NOD2 stimulation, probably to limit NOD2-dependent pro-inflammatory signaling. The sequence is that of Ubiquitin thioesterase otulin from Homo sapiens (Human).